Consider the following 366-residue polypeptide: NADH-quinone oxidoreductase subunit D (366 aa).

It belongs to the complex I 49 kDa subunit family. In terms of assembly, NDH-1 is composed of 14 different subunits. Subunits NuoB, C, D, E, F, and G constitute the peripheral sector of the complex.

It localises to the cell membrane. It carries out the reaction a quinone + NADH + 5 H(+)(in) = a quinol + NAD(+) + 4 H(+)(out). Functionally, NDH-1 shuttles electrons from NADH, via FMN and iron-sulfur (Fe-S) centers, to quinones in the respiratory chain. The immediate electron acceptor for the enzyme in this species is believed to be a menaquinone. Couples the redox reaction to proton translocation (for every two electrons transferred, four hydrogen ions are translocated across the cytoplasmic membrane), and thus conserves the redox energy in a proton gradient. This chain is NADH-quinone oxidoreductase subunit D, found in Desulforamulus reducens (strain ATCC BAA-1160 / DSM 100696 / MI-1) (Desulfotomaculum reducens).